A 71-amino-acid chain; its full sequence is Large ribosomal subunit protein bL31 (71 aa).

Zn(2+) is bound by residues Cys-16, Cys-18, Cys-36, and Cys-39.

Belongs to the bacterial ribosomal protein bL31 family. Type A subfamily. In terms of assembly, part of the 50S ribosomal subunit. It depends on Zn(2+) as a cofactor.

In terms of biological role, binds the 23S rRNA. This chain is Large ribosomal subunit protein bL31, found in Thermotoga sp. (strain RQ2).